The following is a 155-amino-acid chain: Large ribosomal subunit protein uL13 (155 aa).

This sequence belongs to the universal ribosomal protein uL13 family. As to quaternary structure, part of the 50S ribosomal subunit.

Functionally, this protein is one of the early assembly proteins of the 50S ribosomal subunit, although it is not seen to bind rRNA by itself. It is important during the early stages of 50S assembly. The chain is Large ribosomal subunit protein uL13 from Rickettsia bellii (strain OSU 85-389).